The sequence spans 348 residues: Anthranilate phosphoribosyltransferase (348 aa).

Residues Gly-89, 92–93, Thr-97, 99–102, 117–125, and Ser-129 each bind 5-phospho-alpha-D-ribose 1-diphosphate; these read GD, NIST, and KHGNRSVSS. Position 89 (Gly-89) interacts with anthranilate. Residue Ser-101 participates in Mg(2+) binding. Residue Asn-120 participates in anthranilate binding. Residue Arg-175 coordinates anthranilate. Asp-233 and Glu-234 together coordinate Mg(2+).

Belongs to the anthranilate phosphoribosyltransferase family. In terms of assembly, homodimer. Mg(2+) is required as a cofactor.

It catalyses the reaction N-(5-phospho-beta-D-ribosyl)anthranilate + diphosphate = 5-phospho-alpha-D-ribose 1-diphosphate + anthranilate. The protein operates within amino-acid biosynthesis; L-tryptophan biosynthesis; L-tryptophan from chorismate: step 2/5. Functionally, catalyzes the transfer of the phosphoribosyl group of 5-phosphorylribose-1-pyrophosphate (PRPP) to anthranilate to yield N-(5'-phosphoribosyl)-anthranilate (PRA). The polypeptide is Anthranilate phosphoribosyltransferase (Shewanella sp. (strain W3-18-1)).